Consider the following 1009-residue polypeptide: Kinesin-like protein KIN-5C (1009 aa).

Positions 12-359 (NVQVLLRCRP…LDYAHRAKNI (348 aa)) constitute a Kinesin motor domain. ATP is bound at residue 98 to 105 (GQTGTGKT). Residues 406-526 (YQEESERKVM…NSSLHQKIGR (121 aa)) are a coiled coil. Disordered regions lie at residues 862–882 (SNEQ…KDVT) and 987–1009 (YESF…SQVN). 2 stretches are compositionally biased toward basic and acidic residues: residues 863–882 (NEQH…KDVT) and 987–996 (YESFATKETK). A compositionally biased stretch (polar residues) spans 997 to 1009 (PQQLTRSPLSQVN).

The protein belongs to the TRAFAC class myosin-kinesin ATPase superfamily. Kinesin family. KIN-5/BimC subfamily.

It localises to the cytoplasm. Its subcellular location is the cytoskeleton. The protein resides in the spindle. Its function is as follows. Responsible for microtubule translocation. May be important for the organization of phragmoplast-specific arrays of microtubules. Plays an essential role in stabilizing the mitotic spindle. Required during mitotic cytokinesis. In Arabidopsis thaliana (Mouse-ear cress), this protein is Kinesin-like protein KIN-5C.